We begin with the raw amino-acid sequence, 467 residues long: Syntaxin-5 (467 aa).

2 disordered regions span residues 1–53 (MQTR…QSLV) and 58–77 (GHEA…SIST). Residues 1–445 (MQTRRRLHQT…KYFQSVSKNR (445 aa)) are Cytoplasmic-facing. Low complexity predominate over residues 10–22 (TDQQDYSSSSTYT). Residues 29–45 (GGAGAGSVGTGTAGGSV) show a composition bias toward gly residues. A compositionally biased stretch (polar residues) spans 68–77 (NYQSGDSIST). Residues 245 to 269 (IKGDLNALNQQIARLQDISKDQRRH) adopt a coiled-coil conformation. The disordered stretch occupies residues 310–335 (QQKTRRDQFSQGPGPLAAHTVSPSTA). The region spanning 375 to 437 (DNYVQQRAET…EAAHGEILKY (63 aa)) is the t-SNARE coiled-coil homology domain. A helical; Anchor for type IV membrane protein transmembrane segment spans residues 446 to 466 (WLMIKIFGVLIFFFLFFVVFM). A topological domain (vesicular) is located at residue serine 467.

It belongs to the syntaxin family. Homodimer.

It localises to the golgi apparatus. The protein resides in the cis-Golgi network membrane. In terms of biological role, mediates endoplasmic reticulum to Golgi transport. This chain is Syntaxin-5, found in Drosophila melanogaster (Fruit fly).